The chain runs to 94 residues: Pyrimidine/purine nucleoside phosphorylase (94 aa).

Belongs to the nucleoside phosphorylase PpnP family.

It catalyses the reaction a purine D-ribonucleoside + phosphate = a purine nucleobase + alpha-D-ribose 1-phosphate. The enzyme catalyses adenosine + phosphate = alpha-D-ribose 1-phosphate + adenine. The catalysed reaction is cytidine + phosphate = cytosine + alpha-D-ribose 1-phosphate. It carries out the reaction guanosine + phosphate = alpha-D-ribose 1-phosphate + guanine. It catalyses the reaction inosine + phosphate = alpha-D-ribose 1-phosphate + hypoxanthine. The enzyme catalyses thymidine + phosphate = 2-deoxy-alpha-D-ribose 1-phosphate + thymine. The catalysed reaction is uridine + phosphate = alpha-D-ribose 1-phosphate + uracil. It carries out the reaction xanthosine + phosphate = alpha-D-ribose 1-phosphate + xanthine. Its function is as follows. Catalyzes the phosphorolysis of diverse nucleosides, yielding D-ribose 1-phosphate and the respective free bases. Can use uridine, adenosine, guanosine, cytidine, thymidine, inosine and xanthosine as substrates. Also catalyzes the reverse reactions. This chain is Pyrimidine/purine nucleoside phosphorylase, found in Salmonella newport (strain SL254).